The primary structure comprises 687 residues: CWF19-like protein 2 homolog (687 aa).

A coiled-coil region spans residues 6 to 51 (FESGREKDKARQELREAREAMLQQAKERAELRGQRERQKELRGEAD). Basic and acidic residues predominate over residues 24–50 (EAMLQQAKERAELRGQRERQKELRGEA). Residues 24-281 (EAMLQQAKER…PKSRPSCLTD (258 aa)) form a disordered region. Residues 66-92 (KKSKKNVSKHKSRSKSKSSKKSRKHRN) show a composition bias toward basic residues. A compositionally biased stretch (low complexity) spans 93–107 (SSSSSESSTSSSSSF). A coiled-coil region spans residues 108–131 (SEDEKERKRRKKKSKRSRKESASE). Basic residues predominate over residues 114–125 (RKRRKKKSKRSR). 2 positions are modified to phosphoserine: S128 and S130. 2 stretches are compositionally biased toward basic and acidic residues: residues 146–157 (VTKKEPPQRDDW) and 168–180 (FSRE…KPNE). A coiled-coil region spans residues 290-325 (KAIKAELKGKKELAAELNQQLEAARKERAEFIASGE). Residues 355–383 (VRPLVQSGDPNESYGGRMGPKRGSKKVDT) form a disordered region. Positions 444–475 (KQISASDAEKREMQSAIREHEKLVATLDNCER) form a coiled coil.

Belongs to the CWF19 family.

In Drosophila melanogaster (Fruit fly), this protein is CWF19-like protein 2 homolog.